A 575-amino-acid polypeptide reads, in one-letter code: Malto-oligosyltrehalose trehalohydrolase (575 aa).

248-253 is a binding site for substrate; it reads RLDAVH. The Nucleophile role is filled by Asp250. The active-site Proton donor is the Glu287. Substrate is bound by residues 312 to 316 and 381 to 386; these read DDVHH and HDQVGN.

It belongs to the glycosyl hydrolase 13 family.

It localises to the cytoplasm. It carries out the reaction hydrolysis of (1-&gt;4)-alpha-D-glucosidic linkage in 4-alpha-D-[(1-&gt;4)-alpha-D-glucanosyl]n trehalose to yield trehalose and (1-&gt;4)-alpha-D-glucan.. Its pathway is glycan biosynthesis; trehalose biosynthesis. The polypeptide is Malto-oligosyltrehalose trehalohydrolase (treZ) (Arthrobacter ramosus).